We begin with the raw amino-acid sequence, 243 residues long: NAD-dependent protein deacylase (243 aa).

Residues 1–234 enclose the Deacetylase sirtuin-type domain; it reads MYQHIVVLTG…PKLVDTILAG (234 aa). NAD(+) is bound at residue 10-29; the sequence is GAGISAESGLRTFRDQDGLW. Substrate contacts are provided by tyrosine 54 and arginine 57. Position 91 to 94 (91 to 94) interacts with NAD(+); it reads QNID. The Proton acceptor role is filled by histidine 109. Residues cysteine 117 and cysteine 136 each contribute to the Zn(2+) site. Residues 176–178, 202–204, and alanine 220 contribute to the NAD(+) site; these read GTS and NLQ.

Belongs to the sirtuin family. Class III subfamily. It depends on Zn(2+) as a cofactor.

The protein resides in the cytoplasm. The enzyme catalyses N(6)-acetyl-L-lysyl-[protein] + NAD(+) + H2O = 2''-O-acetyl-ADP-D-ribose + nicotinamide + L-lysyl-[protein]. The catalysed reaction is N(6)-succinyl-L-lysyl-[protein] + NAD(+) + H2O = 2''-O-succinyl-ADP-D-ribose + nicotinamide + L-lysyl-[protein]. In terms of biological role, NAD-dependent lysine deacetylase and desuccinylase that specifically removes acetyl and succinyl groups on target proteins. Modulates the activities of several proteins which are inactive in their acylated form. In Shewanella oneidensis (strain ATCC 700550 / JCM 31522 / CIP 106686 / LMG 19005 / NCIMB 14063 / MR-1), this protein is NAD-dependent protein deacylase.